The following is a 165-amino-acid chain: Phosphopantetheine adenylyltransferase (165 aa).

Position 9 (Thr-9) interacts with substrate. ATP-binding positions include 9 to 10 and His-17; that span reads TF. The substrate site is built by Lys-41, Leu-73, and Arg-87. ATP-binding positions include 88-90, Glu-98, and 123-129; these read GLR and LQPIASR.

This sequence belongs to the bacterial CoaD family. In terms of assembly, homohexamer. Mg(2+) is required as a cofactor.

It is found in the cytoplasm. The enzyme catalyses (R)-4'-phosphopantetheine + ATP + H(+) = 3'-dephospho-CoA + diphosphate. The protein operates within cofactor biosynthesis; coenzyme A biosynthesis; CoA from (R)-pantothenate: step 4/5. In terms of biological role, reversibly transfers an adenylyl group from ATP to 4'-phosphopantetheine, yielding dephospho-CoA (dPCoA) and pyrophosphate. The sequence is that of Phosphopantetheine adenylyltransferase from Rhizorhabdus wittichii (strain DSM 6014 / CCUG 31198 / JCM 15750 / NBRC 105917 / EY 4224 / RW1) (Sphingomonas wittichii).